We begin with the raw amino-acid sequence, 493 residues long: Trichothecene 8-O-acetyltransferase (493 aa).

Residues 180–191 (QDQNENEVQQPK) show a composition bias toward polar residues. The interval 180–199 (QDQNENEVQQPKNLPDPDEP) is disordered.

It functions in the pathway sesquiterpene biosynthesis; trichothecene biosynthesis. Functionally, trichothecene 8-O-acetyltransferase; part of 2-gene cluster involved in trichothecene C-8 modification that mediates the biosynthesis of T2-toxin. The biosynthesis of trichothecenes begins with the cyclization of farnesyl diphosphate to trichodiene and is catalyzed by the trichodiene synthase TRI5. Trichodiene undergoes a series of oxygenations catalyzed by the cytochrome P450 monooxygenase TRI4. TRI4 controls the addition of four oxygens at C-2, C-3, C-11, and the C-12, C-13-epoxide to form the intermediate isotrichotriol. Isotrichotriol then undergoes a non-enzymatic isomerization and cyclization to form isotrichodermol. During this process, the oxygen at the C-2 position becomes the pyran ring oxygen and the hydroxyl group at C-11 is lost. More complex type A trichothecenes are built by modifying isotrichodermol through a series of paired hydroxylation and acetylation or acylation steps. Isotrichodermol is converted to isotrichodermin by the acetyltransferase TRI101. TRI101 encodes a C-3 transacetylase that acts as a self-protection or resistance factor during biosynthesis and that the presence of a free C-3 hydroxyl group is a key component of Fusarium trichothecene phytotoxicity. A second hydroxyl group is added to C-15 by the trichothecene C-15 hydroxylase TRI11, producing 15-decalonectrin, which is then acetylated by TRI3, producing calonectrin. A third hydroxyl group is added at C-4 by the cytochrome P450 monooxygenase TRI13, converting calonectrin to 3,15-diacetoxyspirpenol, which is subsequently acetylated bythe acetyltransferase TRI7. A fourth hydroxyl group is added to C-8 by the cytochrome P450 monooxygenase TRI1, followed by the addition of an isovaleryl moiety by TRI16. Finally, the acetyl group is removed from the C-3 position by the trichothecene C-3 esterase TRI8 to produce T-2 toxin. In Fusarium sporotrichioides, this protein is Trichothecene 8-O-acetyltransferase.